Consider the following 191-residue polypeptide: Glutathione-independent glyoxalase DJ-1 (191 aa).

Active-site residues include E16, C111, and H130.

Belongs to the peptidase C56 family.

It localises to the cytoplasm. The protein localises to the nucleus. It carries out the reaction methylglyoxal + H2O = (R)-lactate + H(+). Its function is as follows. Catalyzes the conversion of methylglyoxal (MG) to D-lactate in a single glutathione (GSH)-independent step. May play a role in detoxifying endogenously produced glyoxals. Involved in protection against reactive oxygen species (ROS). In Schizosaccharomyces pombe (strain 972 / ATCC 24843) (Fission yeast), this protein is Glutathione-independent glyoxalase DJ-1.